We begin with the raw amino-acid sequence, 292 residues long: S-adenosyl-L-methionine-dependent Diels-Alderase iccD (292 aa).

The helical transmembrane segment at 240–262 (LPVVRMFYVVLLVPYLFVRLLGI) threads the bilayer.

This sequence belongs to the class I-like SAM-binding methyltransferase superfamily. Erg6/SMT family. S-adenosyl-L-methionine is required as a cofactor.

It localises to the membrane. The enzyme catalyses 3-[(2E,4E,8S,10E,12Z)-4,8-dimethyltetradeca-2,4,10,12-tetraenoyl]-4-hydroxy-5-(4-hydroxyphenyl)-1,2-dihydropyridin-2-one = 8-epi-ilicicolin H. Its pathway is mycotoxin biosynthesis. Its function is as follows. S-adenosyl-l-methionine-dependent Diels-Alderase; part of the gene cluster that mediates the biosynthesis of ilicicolin H, a 4-hydroxy-2-pyridonealkaloid that has potent and broad antifungal activities by inhibiting the mitochondrial respiration chain. IccD catalyzes the Diels-Alder reaction that converts the acyclic 2-pyridone intermediate to 8-epi-ilicicolin H. The biosynthesis of ilicicolin H starts with formation of the tetramic acid by the hybrid PKS-NRPS synthetase iccA with the partnering trans-enoyl reductase iccB since iccA lacks a designated enoylreductase (ER) domain. The cytochrome P450 monooxygenase iccC then catalyzes the ring expansion of the tetramate to the acyclic 2-pyridone. The pericyclase iccD further converts the acyclic 2-pyridone into 8-epi-ilicicolin H. Finally, the epimerase iccE converts 8-epi-ilicicolin H into ilicicolin H via epimerization. IccA to iccE are sufficient for ilicicolin H biosynthesis and the roles of the remaining enzymes, iccF, iccG and iccH within the pathway have still to be determined. This Talaromyces variabilis (Penicillium variabile) protein is S-adenosyl-L-methionine-dependent Diels-Alderase iccD.